The following is a 162-amino-acid chain: Translocator protein 2 (162 aa).

5 consecutive transmembrane segments (helical) span residues 3–23 (LQGP…CMLI), 44–64 (VILL…YLVW), 79–99 (LGLY…FLAA), 103–123 (GLAL…VFIW), and 129–149 (LAAL…AITY).

Belongs to the TspO/BZRP family. In terms of assembly, homotetramer. May also form homodimer. As to expression, expressed in liver, bone marrow and spleen. In spleen, detected in red pulp but not in white pulp.

It localises to the endoplasmic reticulum membrane. It is found in the cell membrane. Functionally, cholesterol-binding protein involved in the redistribution of cholesterol from lipid droplets to the endoplasmic reticulum. Required to meet cholesterol demands during erythropoietic differentiation. May play a role in transport processes at the plasma membrane of erythrocytes, including regulating VDAC-mediated ATP export, and import of the heme precursors protoporphyrin IX and 5-aminolevulinic acid. The chain is Translocator protein 2 (Tspo2) from Mus musculus (Mouse).